The sequence spans 25 residues: Mu-conotoxin CnIIIB (25 aa).

Q1 carries the post-translational modification Pyrrolidone carboxylic acid; partial. 3 cysteine pairs are disulfide-bonded: C3–C15, C4–C21, and C10–C22.

Belongs to the conotoxin M superfamily. In terms of tissue distribution, expressed by the venom duct.

It localises to the secreted. Mu-conotoxins block voltage-gated sodium channels (Nav). This synthetic toxin blocks slightly but irreversibly tetrodotoxin-resistant VGSCs. The chain is Mu-conotoxin CnIIIB from Conus consors (Singed cone).